Reading from the N-terminus, the 146-residue chain is Putative pre-16S rRNA nuclease (146 aa).

The protein belongs to the YqgF nuclease family.

It is found in the cytoplasm. Its function is as follows. Could be a nuclease involved in processing of the 5'-end of pre-16S rRNA. The polypeptide is Putative pre-16S rRNA nuclease (Pseudomonas syringae pv. tomato (strain ATCC BAA-871 / DC3000)).